The chain runs to 214 residues: LexA repressor (214 aa).

The segment at residues 26–46 (VREIGEAVGLSSSSTVHSYLK) is a DNA-binding region (H-T-H motif). Residues Ser-138 and Lys-175 each act as for autocatalytic cleavage activity in the active site.

This sequence belongs to the peptidase S24 family. Homodimer.

The catalysed reaction is Hydrolysis of Ala-|-Gly bond in repressor LexA.. Its function is as follows. Represses a number of genes involved in the response to DNA damage (SOS response), including recA and lexA. In the presence of single-stranded DNA, RecA interacts with LexA causing an autocatalytic cleavage which disrupts the DNA-binding part of LexA, leading to derepression of the SOS regulon and eventually DNA repair. This Desulforamulus reducens (strain ATCC BAA-1160 / DSM 100696 / MI-1) (Desulfotomaculum reducens) protein is LexA repressor.